A 435-amino-acid chain; its full sequence is MASLQALRGTRDILPPETQVWQWIEQTAREILGRAAVQEVRTPIFEQTALFERGIGEATDVVGKEMYSFRDRGDRSLTLRPEGTAGTVRAYIEHGLASQGGVQRLRYTGPMFRYERPQAGRQRQFHQLGLELLGTADARADAEAIALATQILQALGLKNLRLDLNSVGDACDRAAYRQALVDYLTPYAADLDPDSRDRLERNPLRILDSKDERTQAIVAEAPSLHDYLSERSRQLFEQVQQLLTHLGIDYRLEPKLVRGLDYYTHTAFEIISSDLGAQATVCGGGRYDGLVSQLGGPETPAVGWAMGLERLVLLLQQGQAVPPATLDFYLVSRGAIAEGQALILAQKLRSAGFGVELDLSGSAFGKQFKRADRSGAIACLVLGDAEAEQGQVNLKWLQSGEQQTLDQSELLQDSDHWRSRLQAARTVSPVEVAPL.

Belongs to the class-II aminoacyl-tRNA synthetase family. In terms of assembly, homodimer.

The protein localises to the cytoplasm. It carries out the reaction tRNA(His) + L-histidine + ATP = L-histidyl-tRNA(His) + AMP + diphosphate + H(+). This chain is Histidine--tRNA ligase, found in Synechococcus sp. (strain ATCC 27144 / PCC 6301 / SAUG 1402/1) (Anacystis nidulans).